The following is an 89-amino-acid chain: Small ribosomal subunit protein uS14 (89 aa).

This sequence belongs to the universal ribosomal protein uS14 family. In terms of assembly, part of the 30S ribosomal subunit. Contacts proteins S3 and S10.

Binds 16S rRNA, required for the assembly of 30S particles and may also be responsible for determining the conformation of the 16S rRNA at the A site. The protein is Small ribosomal subunit protein uS14 of Leuconostoc citreum (strain KM20).